Reading from the N-terminus, the 508-residue chain is Glycerol kinase (508 aa).

Threonine 14 is a binding site for ADP. Positions 14, 15, and 16 each coordinate ATP. Sn-glycerol 3-phosphate is bound at residue threonine 14. Residue arginine 18 participates in ADP binding. Sn-glycerol 3-phosphate contacts are provided by arginine 84, glutamate 85, and tyrosine 136. Glycerol contacts are provided by arginine 84, glutamate 85, and tyrosine 136. Histidine 232 carries the phosphohistidine; by HPr modification. Aspartate 246 lines the sn-glycerol 3-phosphate pocket. Glycerol is bound by residues aspartate 246 and glutamine 247. ADP is bound by residues threonine 268 and glycine 311. Threonine 268, glycine 311, glutamine 315, and glycine 412 together coordinate ATP. Positions 412 and 416 each coordinate ADP.

This sequence belongs to the FGGY kinase family. In terms of assembly, homotetramer and homodimer (in equilibrium). The phosphoenolpyruvate-dependent sugar phosphotransferase system (PTS), including enzyme I, and histidine-containing protein (HPr) are required for the phosphorylation, which leads to the activation of the enzyme.

It carries out the reaction glycerol + ATP = sn-glycerol 3-phosphate + ADP + H(+). Its pathway is polyol metabolism; glycerol degradation via glycerol kinase pathway; sn-glycerol 3-phosphate from glycerol: step 1/1. Activated by phosphorylation and inhibited by fructose 1,6-bisphosphate (FBP). Functionally, key enzyme in the regulation of glycerol uptake and metabolism. Catalyzes the phosphorylation of glycerol to yield sn-glycerol 3-phosphate. The sequence is that of Glycerol kinase from Streptococcus pyogenes serotype M18 (strain MGAS8232).